Consider the following 219-residue polypeptide: Ras-related protein Rab-3D (219 aa).

At Ala-2 the chain carries N-acetylalanine. Position 29 to 37 (29 to 37 (GNSSVGKTS)) interacts with GDP. Ser-31, Ser-32, Val-33, Gly-34, Lys-35, Thr-36, Ser-37, Pro-49, and Ser-53 together coordinate GTP. Residue Thr-36 participates in Mg(2+) binding. The short motif at 49–58 (PAFVSTVGID) is the Switch 1 element. Mg(2+) contacts are provided by Thr-54 and Asp-77. Gly-80 contacts GTP. Residues 80–96 (GQERYRTITTAYYRGAM) carry the Switch 2 motif. Thr-86 is subject to Phosphothreonine; by LRRK2. GTP is bound by residues Asn-135, Lys-136, Asp-138, Ala-166, and Lys-167. GDP is bound by residues 135–138 (NKCD) and 165–167 (SAK). Residue Ser-190 is modified to Phosphoserine. Residues 190-219 (SLEPSSSPGSNGKGPALGDTPPPQPSSCSC) form a disordered region. Over residues 193-203 (PSSSPGSNGKG) the composition is skewed to low complexity. A compositionally biased stretch (pro residues) spans 209-219 (TPPPQPSSCSC). S-geranylgeranyl cysteine attachment occurs at residues Cys-217 and Cys-219. A Cysteine methyl ester modification is found at Cys-219.

This sequence belongs to the small GTPase superfamily. Rab family. As to quaternary structure, interacts with RIMS1, RIMS2, RPH3A, RPH3AL and RAB3IP. The GTP-bound form interacts with REP15. Interacts with CHM and CHML; phosphorylation at Thr-86 disrupts these interactions. Interacts with MADD (via uDENN domain); the GTP-bound form is preferred for interaction. Requires Mg(2+) as cofactor. Post-translationally, phosphorylation of Thr-86 in the switch II region by LRRK2 prevents the association of RAB regulatory proteins, including CHM and CHML. In terms of tissue distribution, predominantly expressed in the adipocyte tissue, but is also expressed in several other organs including skin, spleen, heart and lung.

Its subcellular location is the cell membrane. The enzyme catalyses GTP + H2O = GDP + phosphate + H(+). Regulated by guanine nucleotide exchange factors (GEFs) which promote the exchange of bound GDP for free GTP. Regulated by GTPase activating proteins (GAPs) which increase the GTP hydrolysis activity. Inhibited by GDP dissociation inhibitors (GDIs) which prevent Rab-GDP dissociation. Its function is as follows. The small GTPases Rab are key regulators of intracellular membrane trafficking, from the formation of transport vesicles to their fusion with membranes. Rabs cycle between an inactive GDP-bound form and an active GTP-bound form that is able to recruit to membranes different sets of downstream effectors directly responsible for vesicle formation, movement, tethering and fusion. RAB3D may be involved in the insulin-induced exocytosis of GLUT4-containing vesicles in adipocytes. The sequence is that of Ras-related protein Rab-3D from Mus musculus (Mouse).